Here is a 943-residue protein sequence, read N- to C-terminus: Isoleucine--tRNA ligase (943 aa).

Residues 58–68 carry the 'HIGH' region motif; that stretch reads PYANGSIHIGH. Glutamate 567 contacts L-isoleucyl-5'-AMP. Positions 608 to 612 match the 'KMSKS' region motif; that stretch reads KMSKS. Position 611 (lysine 611) interacts with ATP. Residues cysteine 906, cysteine 909, cysteine 926, and cysteine 929 each contribute to the Zn(2+) site.

Belongs to the class-I aminoacyl-tRNA synthetase family. IleS type 1 subfamily. In terms of assembly, monomer. Requires Zn(2+) as cofactor.

The protein localises to the cytoplasm. It carries out the reaction tRNA(Ile) + L-isoleucine + ATP = L-isoleucyl-tRNA(Ile) + AMP + diphosphate. Functionally, catalyzes the attachment of isoleucine to tRNA(Ile). As IleRS can inadvertently accommodate and process structurally similar amino acids such as valine, to avoid such errors it has two additional distinct tRNA(Ile)-dependent editing activities. One activity is designated as 'pretransfer' editing and involves the hydrolysis of activated Val-AMP. The other activity is designated 'posttransfer' editing and involves deacylation of mischarged Val-tRNA(Ile). The sequence is that of Isoleucine--tRNA ligase from Ectopseudomonas mendocina (strain ymp) (Pseudomonas mendocina).